An 85-amino-acid polypeptide reads, in one-letter code: Small ribosomal subunit protein uS17 (85 aa).

This sequence belongs to the universal ribosomal protein uS17 family. Part of the 30S ribosomal subunit.

One of the primary rRNA binding proteins, it binds specifically to the 5'-end of 16S ribosomal RNA. In Natranaerobius thermophilus (strain ATCC BAA-1301 / DSM 18059 / JW/NM-WN-LF), this protein is Small ribosomal subunit protein uS17.